Reading from the N-terminus, the 459-residue chain is Limonoid 7-O-acetyltransferse (459 aa).

Active-site proton acceptor residues include histidine 167 and aspartate 391.

Belongs to the plant acyltransferase family. In terms of assembly, monomer. As to expression, expressed in maturing fruits and in juice vesicles.

The enzyme catalyses (1S)-1-acetoxy-luvungin A + acetyl-CoA = (1S)-1,7-diacetoxy-luvungin A + CoA. It participates in secondary metabolite biosynthesis; terpenoid biosynthesis. Functionally, acetyltransferase involved in the biosynthesis of limonoids triterpene natural products such as limonin, a compound with insecticidal activity responsible for the bitter taste in citrus. Catalyzes the formation of (1S)-1,7-diacetoxy-luvungin A from (1S)-1-acetoxy-luvungin A. The protein is Limonoid 7-O-acetyltransferse of Citrus sinensis (Sweet orange).